We begin with the raw amino-acid sequence, 172 residues long: Ribosome maturation factor RimM (172 aa).

The PRC barrel domain occupies 95–168; the sequence is DEGEFYYHQI…RVDVAIMEGL (74 aa).

The protein belongs to the RimM family. In terms of assembly, binds ribosomal protein uS19.

Its subcellular location is the cytoplasm. An accessory protein needed during the final step in the assembly of 30S ribosomal subunit, possibly for assembly of the head region. Essential for efficient processing of 16S rRNA. May be needed both before and after RbfA during the maturation of 16S rRNA. It has affinity for free ribosomal 30S subunits but not for 70S ribosomes. This chain is Ribosome maturation factor RimM, found in Streptococcus uberis (strain ATCC BAA-854 / 0140J).